The chain runs to 449 residues: UDP-N-acetylmuramoylalanine--D-glutamate ligase (449 aa).

118–124 (GTNGKTT) is a binding site for ATP.

Belongs to the MurCDEF family.

It is found in the cytoplasm. It carries out the reaction UDP-N-acetyl-alpha-D-muramoyl-L-alanine + D-glutamate + ATP = UDP-N-acetyl-alpha-D-muramoyl-L-alanyl-D-glutamate + ADP + phosphate + H(+). It participates in cell wall biogenesis; peptidoglycan biosynthesis. Cell wall formation. Catalyzes the addition of glutamate to the nucleotide precursor UDP-N-acetylmuramoyl-L-alanine (UMA). This chain is UDP-N-acetylmuramoylalanine--D-glutamate ligase, found in Staphylococcus epidermidis (strain ATCC 12228 / FDA PCI 1200).